The chain runs to 875 residues: MLSNTLRSNFLKFYTNRNHTPVASSPVFPYNDPSILFTNAGMNQFKNIFLGKEQTSYTRATTSQKCIRAGGKHNDLENVGHTSRHLTFFEMLGNFSFGDYFKQDAISFAWEVSLSVFNFDPDFIYATVHEKDDEAFALWEKYLPTNRIFRLTDKDNFWSMADTGPCGFCSELLFDRGEKFGKATSPLEDADGERFLEYWNLVFMEFNRTSDGTLLALQKKCVDTGAGLERLVSLLSETDTVFEADVLRHLIAKVENLSEITYSPTESKGSAFRVIADHVRSLSFAITDGLLPGNTERGYVLRKILRRAVNYGKRLGFHRPFLAEIVPSLIETMGEAYPELQAAETQIQEVLTTEEEHFFKTLQRGGNLLHQVLKSSASLSKISGEDAFKLKDTYGLPIDEIALLAKDHNYTVDMDTFRKLEMEAKERSRKNTVKNKNDSDSIFQDVDPTNTSEFVGYDMLSCDTFIEGIVKYNEIASTLEEGEEGAIILRTTPFYAEKGGQVGDSGEIFCESGTFLVSHTTTPKAGLIAHHGKLSQGSLQTTMAVTAQVNQNLRKKIANNHTGCHLLHKALEVSLGEHIRQAGSYVDSQKIRLDFSHNKALSPEELLTIETLVNEKIRENVPVTIREALYSDVMNSSEIKQFFGDKYGDIVRVVSAGFSHELCGGTHARATGDIGYFRITKEHAVSTGIRRIEATTGEDAENIARGQDTDLNEIATIIQSPKDQLLVKLRNVMEEKKDLAKQLANLENQLVQQQVKSLLTSCDKVNETSYLVYHLTEEEGQRIQHYANTLHKEVPAKFISLWVTEKNDRYIVLVRVSDDLVKQGIDAQALLEELLAPYGGRCGGKAVSAQGSSKELPQIEVLNTILRQWISTRLA.

The interval 426–445 is disordered; that stretch reads ERSRKNTVKNKNDSDSIFQD. His-561, His-565, Cys-663, and His-667 together coordinate Zn(2+).

Belongs to the class-II aminoacyl-tRNA synthetase family. Requires Zn(2+) as cofactor.

The protein resides in the cytoplasm. It catalyses the reaction tRNA(Ala) + L-alanine + ATP = L-alanyl-tRNA(Ala) + AMP + diphosphate. In terms of biological role, catalyzes the attachment of alanine to tRNA(Ala) in a two-step reaction: alanine is first activated by ATP to form Ala-AMP and then transferred to the acceptor end of tRNA(Ala). Also edits incorrectly charged Ser-tRNA(Ala) and Gly-tRNA(Ala) via its editing domain. The sequence is that of Alanine--tRNA ligase from Chlamydia muridarum (strain MoPn / Nigg).